The primary structure comprises 1606 residues: E3 ubiquitin-protein ligase HECW1 (1606 aa).

In terms of domain architecture, C2 spans 182-318 (SAAPIFKSIG…LERHAIGDRV (137 aa)). Disordered regions lie at residues 349-418 (DDEE…PAEE), 459-538 (AEQL…CSLP), 566-672 (LLHS…SCEG), and 730-815 (STVF…SQLP). Residues 354–373 (SLSTEPESAQIQDSPMNNLM) are compositionally biased toward polar residues. Over residues 380 to 392 (PRSEAPESSESWK) the composition is skewed to basic and acidic residues. Acidic residues-rich tracts occupy residues 500–511 (EEEEKEQEEEGD) and 579–588 (AEEEDGAEEE). Basic and acidic residues predominate over residues 589-600 (STLKDSSEKDGL). The segment covering 612-621 (ALEEDREEPE) has biased composition (acidic residues). Polar residues-rich tracts occupy residues 651–663 (HPSTGSESDSSPR), 751–765 (DSMQSPELDPESTNG), and 806–815 (HNSQPVSQLP). The region spanning 829-862 (EPLPPNWEARIDSHGRVFYVDHVNRTTTWQRPTA) is the WW 1 domain. The stretch at 870-901 (RRSGSIQQMEQLNRRYQNIQRTIATERSEEDS) forms a coiled coil. Residues Ser874, Ser937, and Ser939 each carry the phosphoserine modification. Residues 894-938 (TERSEEDSGSQSCEQAPAGGGGGGGSDSEAESSQSSLDLRREGSL) are disordered. Residues 1018-1051 (LELPRGWEIKTDQQGKSFFVDHNSRATTFIDPRI) form the WW 2 domain. The HECT domain maps to 1271–1606 (SRKELQRNKL…VEETSTFGLE (336 aa)). Cys1574 (glycyl thioester intermediate) is an active-site residue.

As to quaternary structure, interacts with DVL1 and SSR3. Also interacts with mutant SOD1. In terms of tissue distribution, predominantly expressed in neurons of adult and fetal brain. Weakly expressed in the kidney.

It is found in the cytoplasm. The enzyme catalyses S-ubiquitinyl-[E2 ubiquitin-conjugating enzyme]-L-cysteine + [acceptor protein]-L-lysine = [E2 ubiquitin-conjugating enzyme]-L-cysteine + N(6)-ubiquitinyl-[acceptor protein]-L-lysine.. Its pathway is protein modification; protein ubiquitination. Its function is as follows. E3 ubiquitin-protein ligase that mediates ubiquitination and subsequent degradation of DVL1. Also targets the mutant SOD1 protein involved in familial amyotrophic lateral sclerosis (FALS). Forms cytotoxic aggregates with DVL1, SSR3 and mutant SOD1 that lead to motor neuron death in FALS. The sequence is that of E3 ubiquitin-protein ligase HECW1 (HECW1) from Homo sapiens (Human).